Reading from the N-terminus, the 87-residue chain is Asparagine--tRNA ligase, cytoplasmic (87 aa).

The protein belongs to the class-II aminoacyl-tRNA synthetase family.

It is found in the cytoplasm. The enzyme catalyses tRNA(Asn) + L-asparagine + ATP = L-asparaginyl-tRNA(Asn) + AMP + diphosphate + H(+). This chain is Asparagine--tRNA ligase, cytoplasmic (DED81), found in Saccharomyces paradoxus (Yeast).